Here is a 177-residue protein sequence, read N- to C-terminus: Inorganic pyrophosphatase (177 aa).

Residues lysine 31, arginine 45, and tyrosine 57 each contribute to the substrate site. Mg(2+) contacts are provided by aspartate 67, aspartate 72, and aspartate 104. Tyrosine 141 lines the substrate pocket.

The protein belongs to the PPase family. As to quaternary structure, homohexamer. Also forms homotrimers, but the trimeric form is 23% less active than the hexamer. In fact, likely forms a dimer of trimers. Mg(2+) serves as cofactor.

It is found in the cytoplasm. It carries out the reaction diphosphate + H2O = 2 phosphate + H(+). With respect to regulation, inhibited by sodium fluoride (NaF) in vitro, similarly to other class A type inorganic pyrophosphatases. In terms of biological role, catalyzes the hydrolysis of inorganic pyrophosphate (PPi) forming two phosphate ions. The hydrolysis of PPi by inorganic pyrophosphatase releases a considerable amount of energy that can drive unfavorable biochemical transformations to completion. Is not active on nucleoside triphosphates (ATP, TTP, GTP, or CTP) or nucleoside diphosphate (ADP). The protein is Inorganic pyrophosphatase of Haloferax volcanii (strain ATCC 29605 / DSM 3757 / JCM 8879 / NBRC 14742 / NCIMB 2012 / VKM B-1768 / DS2) (Halobacterium volcanii).